The chain runs to 671 residues: Zinc finger protein 750 (671 aa).

A CCHC-type zinc finger spans residues 25–51; sequence YKCFQCPFTCNEKSHLFNHMKYGLCKN. Zn(2+) contacts are provided by cysteine 27, cysteine 30, histidine 43, and cysteine 49. Disordered stretches follow at residues 66–87, 366–433, and 592–671; these read PKVN…SPVP, ETSP…KDFT, and SSPG…PRVS. 2 stretches are compositionally biased toward polar residues: residues 67 to 78 and 402 to 412; these read KVNSTDQKQPSN and SPTNFTQNSQG.

It localises to the nucleus. Transcription factor involved in epidermis differentiation. The polypeptide is Zinc finger protein 750 (znf750) (Xenopus tropicalis (Western clawed frog)).